Reading from the N-terminus, the 341-residue chain is Major histocompatibility complex class I-related protein 1 (341 aa).

The N-terminal stretch at 1–18 (MMLLLPLLAVFLVKRSHT) is a signal peptide. The interval 19 to 105 (RTHSLRYFRL…RHLQRHYNHS (87 aa)) is alpha-1. Residues 19–197 (RTHSLRYFRL…EYGRDTLERT (179 aa)) are antigen-binding cleft. The Extracellular segment spans residues 19 to 296 (RTHSLRYFRL…APRESGDILR (278 aa)). Residues Y25 and R27 each contribute to the 8-(9H-purin-6-yl)-2-oxa-8-azabicyclo[3.3.1]nona-3,6-diene-4,6-dicarbaldehyde site. The 5-(2-oxoethylideneamino)-6-(D-ribitylamino)uracil site is built by R27, S42, and K61. The 5-(2-oxopropylideneamino)-6-(D-ribitylamino)uracil site is built by R27, S42, and K61. Residues R27, S42, and K61 each coordinate 7-hydroxy-6-methyl-8-(1-D-ribityl)lumazine. 8-(9H-purin-6-yl)-2-oxa-8-azabicyclo[3.3.1]nona-3,6-diene-4,6-dicarbaldehyde contacts are provided by K61 and H76. Residue K61 participates in 2-amino-4-oxopteridine-6-carbaldehyde binding. Position 61 (K61) interacts with pyridoxal. A glycan (N-linked (GlcNAc...) asparagine) is linked at N103. The interval 106–197 (GLHTYQRMIG…EYGRDTLERT (92 aa)) is alpha-2. R112 provides a ligand contact to 8-(9H-purin-6-yl)-2-oxa-8-azabicyclo[3.3.1]nona-3,6-diene-4,6-dicarbaldehyde. 5-(2-oxoethylideneamino)-6-(D-ribitylamino)uracil contacts are provided by R112, Y170, and Q171. The 5-(2-oxopropylideneamino)-6-(D-ribitylamino)uracil site is built by R112, Y170, and Q171. 7-hydroxy-6-methyl-8-(1-D-ribityl)lumazine is bound by residues R112, Y170, and Q171. 2 disulfide bridges follow: C116/C179 and C218/C274. Residues 198-289 (EHPVVRTTRK…GRQMVLEAPR (92 aa)) form an alpha-3 region. In terms of domain architecture, Ig-like C1-type spans 200 to 301 (PVVRTTRKET…GDILRVSTIS (102 aa)). Residues 290 to 296 (ESGDILR) are connecting peptide. The helical transmembrane segment at 297–317 (VSTISGTTILIIALAGVGVLI) threads the bilayer. Residues 318–341 (WRRSQELKEVMYQPTQVNEGSSPS) lie on the Cytoplasmic side of the membrane.

This sequence belongs to the MHC class I family. In terms of assembly, heterotrimer that consists of MR1, B2M and metabolite antigen. Major classes of metabolite ligands presented by MR1 include riboflavin-related antigens, pyrimidines and ribityl lumazines, nucleobase adducts and folate derivatives. Forms reversible covalent Schiff base complexes with microbial pyrimidine-based metabolite, which serves as a molecular switch triggering complete folding, stable association with B2M and translocation of the ternary complex from endoplasmic reticulum to the plasma membrane. Alternatively, forms non-Schiff base complexes with ribityl lumazines. On antigen-presenting cells, the ternary complex interacts with TCR on MR1-restricted CD4- or CD8-positive T cell subsets. Interacts with TAPBP and TAPBPL chaperones in the endoplasmic reticulum. TAPBP associated or not with MHC class I peptide loading complex binds ligand-free MR1 or MR1-B2M complex, providing for stable MR1 pools ready for metabolite antigen processing. TAPBPL interacts with MR1 in a ligand-independent way; this interaction may stabilize MR1 pool and facilitate ligand loading and dissociation. Structurally, MR1-B2M heterodimer adopts a topology similar to classical MHC class I molecules, with alpha-1 and alpha-2 domains of MR1 forming the antigen-binding cleft composed of two alpha-helices resting on a floor of 7-stranded anti-parallel beta-pleated sheet. In terms of processing, N-glycosylated. Highly expressed thymus. Expressed in liver, kidney, spleen, heart, brain, lung, skeletal muscle and testis.

Its subcellular location is the cell membrane. It localises to the endoplasmic reticulum membrane. The protein localises to the golgi apparatus membrane. It is found in the early endosome membrane. The protein resides in the late endosome membrane. Antigen-presenting molecule specialized in displaying microbial pyrimidine-based metabolites to alpha-beta T cell receptors (TCR) on innate-type mucosal-associated invariant T (MAIT) cells. In complex with B2M preferentially presents riboflavin-derived metabolites to semi-invariant TRAV1 TCRs on MAIT cells, guiding immune surveillance of the microbial metabolome at mucosal epithelial barriers. Signature pyrimidine-based microbial antigens are generated via non-enzymatic condensation of metabolite intermediates of the riboflavin pathway with by-products arising from other metabolic pathways such as glycolysis. Typical potent antigenic metabolites are 5-(2-oxoethylideneamino)-6-D-ribitylaminouracil (5-OE-RU) and 5-(2-oxopropylideneamino)-6-D-ribitylaminouracil (5-OP-RU), products of condensation of 5-amino-6-D-ribityaminouracil (5-A-RU) with glyoxal or methylglyoxal by-products, respectively. May present microbial antigens to various TRAV1-negative MAIT cell subsets, providing for unique recognition of diverse microbes, including pathogens that do not synthesize riboflavin. Upon antigen recognition, elicits rapid innate-type MAIT cell activation to eliminate pathogenic microbes by directly killing infected cells. During T cell development, drives thymic selection and post-thymic terminal differentiation of MAIT cells in a process dependent on commensal microflora. Acts as an immune sensor of cancer cell metabolome. May present a tumor-specific or -associated metabolite essential for cancer cell survival to a pan-cancer TCR on a non-MAIT CD8-positive T cell clone, triggering T cell-mediated killing of a wide range of cancer cell types. May present tumor-enriched pyridoxal and pyridoxal 5'-phosphate antigens, enabling preferential recognition of cancer cells. Presents nucleobase carbonyl adducts generated during oxidative stress. Captures M3Ade, a nucleobase adduct composed of one adenine modified by a malondialdehyde trimer, for recognition by MR1-restricted T cell clones expressing a polyclonal TCR repertoire. The protein is Major histocompatibility complex class I-related protein 1 of Mus musculus (Mouse).